The sequence spans 152 residues: MTEYKKVIAQNKKALFHYFIEERLEAGIVLKGSEVRSLRQGKASIEESHAADTGHEVFLYNCHIAEYEKANRFNHATRRPRKLLLHTKEIKKIIGRIRIKGYTLVALSMYFNKKNKVKVELGIAKGKKLHDKRESIKEKDWKRDQSRLIRQK.

It belongs to the SmpB family.

Its subcellular location is the cytoplasm. Required for rescue of stalled ribosomes mediated by trans-translation. Binds to transfer-messenger RNA (tmRNA), required for stable association of tmRNA with ribosomes. tmRNA and SmpB together mimic tRNA shape, replacing the anticodon stem-loop with SmpB. tmRNA is encoded by the ssrA gene; the 2 termini fold to resemble tRNA(Ala) and it encodes a 'tag peptide', a short internal open reading frame. During trans-translation Ala-aminoacylated tmRNA acts like a tRNA, entering the A-site of stalled ribosomes, displacing the stalled mRNA. The ribosome then switches to translate the ORF on the tmRNA; the nascent peptide is terminated with the 'tag peptide' encoded by the tmRNA and targeted for degradation. The ribosome is freed to recommence translation, which seems to be the essential function of trans-translation. In Rickettsia rickettsii, this protein is SsrA-binding protein.